Consider the following 182-residue polypeptide: NAD(P)H-quinone oxidoreductase subunit I, chloroplastic (182 aa).

2 4Fe-4S ferredoxin-type domains span residues 55 to 84 and 95 to 124; these read GRIHFEFDKCIACEVCVRVCPIDLPVVDWK and LNYSIDFGICIFCGNCVEYCPTNCLSMTEE. Residues Cys-64, Cys-67, Cys-70, Cys-74, Cys-104, Cys-107, Cys-110, and Cys-114 each contribute to the [4Fe-4S] cluster site.

The protein belongs to the complex I 23 kDa subunit family. In terms of assembly, NDH is composed of at least 16 different subunits, 5 of which are encoded in the nucleus. The cofactor is [4Fe-4S] cluster.

It localises to the plastid. It is found in the chloroplast thylakoid membrane. It carries out the reaction a plastoquinone + NADH + (n+1) H(+)(in) = a plastoquinol + NAD(+) + n H(+)(out). The catalysed reaction is a plastoquinone + NADPH + (n+1) H(+)(in) = a plastoquinol + NADP(+) + n H(+)(out). Its function is as follows. NDH shuttles electrons from NAD(P)H:plastoquinone, via FMN and iron-sulfur (Fe-S) centers, to quinones in the photosynthetic chain and possibly in a chloroplast respiratory chain. The immediate electron acceptor for the enzyme in this species is believed to be plastoquinone. Couples the redox reaction to proton translocation, and thus conserves the redox energy in a proton gradient. The sequence is that of NAD(P)H-quinone oxidoreductase subunit I, chloroplastic from Buxus microphylla (Littleleaf boxwood).